We begin with the raw amino-acid sequence, 137 residues long: Small ribosomal subunit protein uS12 (137 aa).

The segment at 1–23 (MPTINQLVRKPRKSNATKSKSPA) is disordered. Aspartate 102 is modified (3-methylthioaspartic acid).

The protein belongs to the universal ribosomal protein uS12 family. In terms of assembly, part of the 30S ribosomal subunit. Contacts proteins S8 and S17. May interact with IF1 in the 30S initiation complex.

Functionally, with S4 and S5 plays an important role in translational accuracy. In terms of biological role, interacts with and stabilizes bases of the 16S rRNA that are involved in tRNA selection in the A site and with the mRNA backbone. Located at the interface of the 30S and 50S subunits, it traverses the body of the 30S subunit contacting proteins on the other side and probably holding the rRNA structure together. The combined cluster of proteins S8, S12 and S17 appears to hold together the shoulder and platform of the 30S subunit. The protein is Small ribosomal subunit protein uS12 of Leuconostoc citreum (strain KM20).